A 92-amino-acid polypeptide reads, in one-letter code: Small ribosomal subunit protein bS20 (92 aa).

A disordered region spans residues 1–24 (MANTTSAKKATRKIARRTDVNKAR).

Belongs to the bacterial ribosomal protein bS20 family.

Its function is as follows. Binds directly to 16S ribosomal RNA. The protein is Small ribosomal subunit protein bS20 of Rhizobium etli (strain ATCC 51251 / DSM 11541 / JCM 21823 / NBRC 15573 / CFN 42).